Here is an 81-residue protein sequence, read N- to C-terminus: Putative defensin-like protein 26 (81 aa).

Residues 1 to 21 (MASLKVFSFALLIVLTFSVIG) form the signal peptide. Intrachain disulfides connect Cys33-Cys81 and Cys52-Cys77.

This sequence belongs to the DEFL family.

The protein resides in the secreted. The polypeptide is Putative defensin-like protein 26 (Arabidopsis thaliana (Mouse-ear cress)).